A 547-amino-acid polypeptide reads, in one-letter code: Chaperonin GroEL (547 aa).

ATP-binding positions include 30-33, Lys51, 87-91, Gly415, and Asp496; these read TLGP and DGTTT. The tract at residues 527–547 is disordered; that stretch reads SDKAEPMPMRGGMGGMGGMDF. Residues 537–547 are compositionally biased toward gly residues; it reads GGMGGMGGMDF.

The protein belongs to the chaperonin (HSP60) family. As to quaternary structure, forms a cylinder of 14 subunits composed of two heptameric rings stacked back-to-back. Interacts with the co-chaperonin GroES.

The protein resides in the cytoplasm. It carries out the reaction ATP + H2O + a folded polypeptide = ADP + phosphate + an unfolded polypeptide.. In terms of biological role, together with its co-chaperonin GroES, plays an essential role in assisting protein folding. The GroEL-GroES system forms a nano-cage that allows encapsulation of the non-native substrate proteins and provides a physical environment optimized to promote and accelerate protein folding. The chain is Chaperonin GroEL from Rickettsia rickettsii (strain Sheila Smith).